A 50-amino-acid chain; its full sequence is Large ribosomal subunit protein eL39 (50 aa).

The segment covering 1 to 12 (MGKKSKASKKRL) has biased composition (basic residues). 2 disordered regions span residues 1–20 (MGKKSKASKKRLAKLERQNS) and 30–50 (TNRDVQRNPKRRNWRRNDTDE).

The protein belongs to the eukaryotic ribosomal protein eL39 family.

The protein is Large ribosomal subunit protein eL39 (rpl39e) of Halobacterium salinarum (strain ATCC 700922 / JCM 11081 / NRC-1) (Halobacterium halobium).